The chain runs to 348 residues: Phospho-2-dehydro-3-deoxyheptonate aldolase, Trp-sensitive (348 aa).

The protein belongs to the class-I DAHP synthase family.

The catalysed reaction is D-erythrose 4-phosphate + phosphoenolpyruvate + H2O = 7-phospho-2-dehydro-3-deoxy-D-arabino-heptonate + phosphate. It functions in the pathway metabolic intermediate biosynthesis; chorismate biosynthesis; chorismate from D-erythrose 4-phosphate and phosphoenolpyruvate: step 1/7. In terms of biological role, stereospecific condensation of phosphoenolpyruvate (PEP) and D-erythrose-4-phosphate (E4P) giving rise to 3-deoxy-D-arabino-heptulosonate-7-phosphate (DAHP). The sequence is that of Phospho-2-dehydro-3-deoxyheptonate aldolase, Trp-sensitive (aroH) from Buchnera aphidicola subsp. Schizaphis graminum (strain Sg).